We begin with the raw amino-acid sequence, 285 residues long: MAGAVSEARFAGLSLMQLHELLEDDAQLGDMVRGMEEAQTVQLNKEMTLASNRSLAEGNLLYQPQLDAQKARLTQKYQELQVLFEAYQIKKTKLDKQSNNASLETLLALLQAEGAKIEEDTENMAEKFLDGELPLDSFIDVYQSKRKLAHMRRVKVEKLQELVLKGQRHPQAGAPPPPRVPEPSPATALPYPSLEATGLPSVVPRRIPPPPPPVPAGHVATPFAAAMGSGQVSAYPGLQCPPLPPRVGLPSQQGFSAQLVSPYPPALPQRPPPRMAPHQPGFILQ.

The tract at residues 50-170 (ASNRSLAEGN…ELVLKGQRHP (121 aa)) is interaction with IST1. The VPS37 C-terminal domain occupies 84-173 (FEAYQIKKTK…LKGQRHPQAG (90 aa)). Disordered stretches follow at residues 167-215 (QRHP…PPVP) and 242-285 (PLPP…FILQ). 2 stretches are compositionally biased toward pro residues: residues 173–184 (GAPPPPRVPEPS) and 206–215 (RIPPPPPPVP). Residues 250–259 (PSQQGFSAQL) are compositionally biased toward polar residues. A compositionally biased stretch (pro residues) spans 262-275 (PYPPALPQRPPPRM). Low complexity predominate over residues 276 to 285 (APHQPGFILQ).

This sequence belongs to the VPS37 family. Component of the ESCRT-I complex (endosomal sorting complex required for transport I) which consists of TSG101, VPS28, a VPS37 protein (VPS37A to -D) and MVB12A or MVB12B in a 1:1:1:1 stoichiometry. Interacts with TSG101, VPS28, MVB12A and MVB12B. Component of the ESCRT-I complex (endosomal sorting complex required for transport I) which consists of TSG101, VPS28, a VPS37 protein (VPS37A to -D) and UBAP1 in a 1:1:1:1 stoichiometry. Interacts with CEP55. Interacts with IST1.

The protein resides in the late endosome membrane. Component of the ESCRT-I complex, a regulator of vesicular trafficking process. Required for the sorting of endocytic ubiquitinated cargos into multivesicular bodies. May be involved in cell growth and differentiation. The sequence is that of Vacuolar protein sorting-associated protein 37B (Vps37b) from Mus musculus (Mouse).